We begin with the raw amino-acid sequence, 274 residues long: Penicillin-insensitive murein endopeptidase (274 aa).

Residues 1-19 form the signal peptide; the sequence is MNKTAIALLALLASSASLA. 3 cysteine pairs are disulfide-bonded: Cys-44-Cys-265, Cys-187-Cys-235, and Cys-216-Cys-223. Residues His-110, His-113, Asp-120, Asp-147, His-150, and His-211 each coordinate Zn(2+). Residues 227–274 form a disordered region; it reads PLPPPGDGCGAELQSWFEPPKPGTTKPEKKTPPPLPPSCQALLDEHVI.

This sequence belongs to the peptidase M74 family. As to quaternary structure, dimer. The cofactor is Zn(2+).

The protein localises to the periplasm. In terms of biological role, murein endopeptidase that cleaves the D-alanyl-meso-2,6-diamino-pimelyl amide bond that connects peptidoglycan strands. Likely plays a role in the removal of murein from the sacculus. In Escherichia coli O9:H4 (strain HS), this protein is Penicillin-insensitive murein endopeptidase.